A 234-amino-acid chain; its full sequence is Leucyl/phenylalanyl-tRNA--protein transferase (234 aa).

The protein belongs to the L/F-transferase family.

It localises to the cytoplasm. The enzyme catalyses N-terminal L-lysyl-[protein] + L-leucyl-tRNA(Leu) = N-terminal L-leucyl-L-lysyl-[protein] + tRNA(Leu) + H(+). It catalyses the reaction N-terminal L-arginyl-[protein] + L-leucyl-tRNA(Leu) = N-terminal L-leucyl-L-arginyl-[protein] + tRNA(Leu) + H(+). It carries out the reaction L-phenylalanyl-tRNA(Phe) + an N-terminal L-alpha-aminoacyl-[protein] = an N-terminal L-phenylalanyl-L-alpha-aminoacyl-[protein] + tRNA(Phe). Functionally, functions in the N-end rule pathway of protein degradation where it conjugates Leu, Phe and, less efficiently, Met from aminoacyl-tRNAs to the N-termini of proteins containing an N-terminal arginine or lysine. The protein is Leucyl/phenylalanyl-tRNA--protein transferase of Syntrophobacter fumaroxidans (strain DSM 10017 / MPOB).